Consider the following 357-residue polypeptide: Non-structural protein NS2 (357 aa).

Disordered regions lie at residues 163–199 (NERESAPRLQVQSVAPREESRWMDDDEAKVDEEAREM) and 228–267 (LDEKDEEDGDEREDEERVKTLSDDDEQGEDASDDEHPKTH). Composition is skewed to acidic residues over residues 230–241 (EKDEEDGDERED) and 250–260 (DDDEQGEDASD).

The protein belongs to the orbivirus non-structural protein NS2 family.

Its function is as follows. Single-stranded RNA-binding protein. The sequence is that of Non-structural protein NS2 (Segment-8) from Antilocapra americana (Pronghorn).